The primary structure comprises 80 residues: Exodeoxyribonuclease 7 small subunit (80 aa).

This sequence belongs to the XseB family. In terms of assembly, heterooligomer composed of large and small subunits.

It localises to the cytoplasm. It carries out the reaction Exonucleolytic cleavage in either 5'- to 3'- or 3'- to 5'-direction to yield nucleoside 5'-phosphates.. Its function is as follows. Bidirectionally degrades single-stranded DNA into large acid-insoluble oligonucleotides, which are then degraded further into small acid-soluble oligonucleotides. The protein is Exodeoxyribonuclease 7 small subunit of Caulobacter sp. (strain K31).